The primary structure comprises 685 residues: Kinesin-like protein KIP2 (685 aa).

2 disordered regions span residues 11–46 (EHVGSAGASLPQTPGSRSFALGAHPGPQKRIGGPAQ) and 63–101 (SRPSSPYMQASPLLKGSESGGSAGSPQSPDAPSSASGAS). The segment covering 86 to 101 (GSPQSPDAPSSASGAS) has biased composition (low complexity). The Kinesin motor domain occupies 113-446 (NVSVAIRIKP…VRFASRAKNI (334 aa)). 185 to 192 (GMTGSGKT) lines the ATP pocket. Coiled coils occupy residues 464 to 486 (IIQNLRKQLDEQHETIVMLRRSA) and 520 to 663 (LEVE…SALS). The segment at 485–510 (SAAAPSGNGSTSPLDSPGVGGTSLSE) is disordered.

Belongs to the TRAFAC class myosin-kinesin ATPase superfamily. Kinesin family.

It localises to the cytoplasm. The protein localises to the cytoskeleton. Its function is as follows. Required for assembly of the mitotic spindle. This chain is Kinesin-like protein KIP2 (KIP2), found in Eremothecium gossypii (strain ATCC 10895 / CBS 109.51 / FGSC 9923 / NRRL Y-1056) (Yeast).